A 409-amino-acid polypeptide reads, in one-letter code: Serine/threonine transporter SstT (409 aa).

The next 9 helical transmembrane spans lie at 14–34, 57–77, 89–109, 149–169, 190–210, 224–244, 296–316, 338–358, and 365–385; these read GNLIIQILIGITIGGILGFIA, GALKAVAPILVFILVASSIII, IIILYLVGTFLASLSAVVVSF, AISSGNYIGILTWAIGTGIAL, IVKFIIKLAPFGIFGLVATSV, LLLVLVGTMLFVAFVVNAAIV, ISIPLGATINMAGAAVTIAVL, IIAAIGACGASGVAGGSLMLI, and FGISNDIAMQVVAVGFIIGVV.

This sequence belongs to the dicarboxylate/amino acid:cation symporter (DAACS) (TC 2.A.23) family.

It localises to the cell inner membrane. The enzyme catalyses L-serine(in) + Na(+)(in) = L-serine(out) + Na(+)(out). The catalysed reaction is L-threonine(in) + Na(+)(in) = L-threonine(out) + Na(+)(out). Its function is as follows. Involved in the import of serine and threonine into the cell, with the concomitant import of sodium (symport system). This Campylobacter fetus subsp. fetus (strain 82-40) protein is Serine/threonine transporter SstT.